The sequence spans 210 residues: Chaperone protein TorD (210 aa).

This sequence belongs to the TorD/DmsD family. TorD subfamily.

The protein resides in the cytoplasm. Its function is as follows. Involved in the biogenesis of TorA. Acts on TorA before the insertion of the molybdenum cofactor and, as a result, probably favors a conformation of the apoenzyme that is competent for acquiring the cofactor. The protein is Chaperone protein TorD of Salmonella newport (strain SL254).